We begin with the raw amino-acid sequence, 288 residues long: 4-diphosphocytidyl-2-C-methyl-D-erythritol kinase (288 aa).

K11 is an active-site residue. 95-105 (PVAAGMAGGSS) serves as a coordination point for ATP. D137 is an active-site residue.

Belongs to the GHMP kinase family. IspE subfamily.

The catalysed reaction is 4-CDP-2-C-methyl-D-erythritol + ATP = 4-CDP-2-C-methyl-D-erythritol 2-phosphate + ADP + H(+). Its pathway is isoprenoid biosynthesis; isopentenyl diphosphate biosynthesis via DXP pathway; isopentenyl diphosphate from 1-deoxy-D-xylulose 5-phosphate: step 3/6. Its function is as follows. Catalyzes the phosphorylation of the position 2 hydroxy group of 4-diphosphocytidyl-2C-methyl-D-erythritol. The sequence is that of 4-diphosphocytidyl-2-C-methyl-D-erythritol kinase from Lachnospira eligens (strain ATCC 27750 / DSM 3376 / VPI C15-48 / C15-B4) (Eubacterium eligens).